The sequence spans 303 residues: N-acetyl-D-glucosamine kinase (303 aa).

ATP-binding positions include 4-11 (GFDIGGTK) and 133-140 (GVGGGLIF). Zn(2+) is bound by residues His-157, Cys-177, Cys-179, and Cys-184.

This sequence belongs to the ROK (NagC/XylR) family. NagK subfamily.

It carries out the reaction N-acetyl-D-glucosamine + ATP = N-acetyl-D-glucosamine 6-phosphate + ADP + H(+). It participates in cell wall biogenesis; peptidoglycan recycling. Catalyzes the phosphorylation of N-acetyl-D-glucosamine (GlcNAc) derived from cell-wall degradation, yielding GlcNAc-6-P. This Escherichia coli O6:H1 (strain CFT073 / ATCC 700928 / UPEC) protein is N-acetyl-D-glucosamine kinase.